We begin with the raw amino-acid sequence, 927 residues long: GPI inositol-deacylase (927 aa).

Topologically, residues 1-4 (MNPL) are cytoplasmic. A helical transmembrane segment spans residues 5 to 25 (SAVFNSVVLVLLALGVTDVFF). The Lumenal segment spans residues 26-595 (SYESSRCSMT…QIVRFHGIYL (570 aa)). Residues Asn-75 and Asn-155 are each glycosylated (N-linked (GlcNAc...) asparagine). Ser-169 is an active-site residue. Residues Asn-230, Asn-362, Asn-397, Asn-432, Asn-444, and Asn-482 are each glycosylated (N-linked (GlcNAc...) asparagine). Residues 596–616 (PVYIVANLLLAYGAQLHSILI) form a helical membrane-spanning segment. Over 617-672 (QGSCMDLDLSFDVAAKPYKVDPVLIICKYLLNYKWFKNYWDGLMLPQLDAVQLHAY) the chain is Cytoplasmic. The chain crosses the membrane as a helical span at residues 673–693 (GFWFPLASLFFFIFGTSIAYW). Residues 694–733 (SSIGLQAAVRILSSLWIYLKRPSMFPKESKCITYRVYAET) are Lumenal-facing. The helical transmembrane segment at 734–754 (LFFAFISWRSCGTFSLLLVFL) threads the bilayer. The Cytoplasmic portion of the chain corresponds to 755 to 821 (RYLSKVLILY…KALDDCLKMH (67 aa)). The chain crosses the membrane as a helical span at residues 822–842 (FTILHLNLWIVLLGLPSFIYW). Topologically, residues 843-858 (LKTLRYTIQLDPDPNR) are lumenal. A helical membrane pass occupies residues 859 to 879 (VSALVLIFILEILMNSTTSAI). At 880-887 (KSSVCLKT) the chain is on the cytoplasmic side. The chain crosses the membrane as a helical span at residues 888–908 (AAVLQLPLSIIVVAFGTLHLY). Topologically, residues 909–927 (RISNLIAFSLFLHVVCCFV) are lumenal.

This sequence belongs to the GPI inositol-deacylase family.

The protein resides in the endoplasmic reticulum membrane. Its function is as follows. GPI inositol-deacylase that catalyzes the remove of the acyl chain linked to the 2-OH position of inositol ring from the GPI-anchored protein (GPI-AP) in the endoplasmic reticulum. Initiates the post-attachment remodeling phase of GPI-AP biogenesis and participates in endoplasmic reticulum (ER)-to-Golgi transport of GPI-anchored protein. This Xenopus laevis (African clawed frog) protein is GPI inositol-deacylase.